Consider the following 620-residue polypeptide: Cilia- and flagella-associated protein 52 (620 aa).

11 WD repeats span residues 62-106 (GHGN…LIAR), 109-150 (LHKG…AICG), 156-195 (LNVG…RKIW), 288-327 (QLQG…ETLI), 330-369 (CHFE…ELLR), 372-411 (VPNM…LMYT), 415-454 (AHRI…QKLE), 459-498 (EHKS…RNQM), 500-541 (LANT…RELE), 543-582 (SLSG…VTHV), and 585-620 (GHSG…PFAS).

It belongs to the CFAP52 family. As to quaternary structure, microtubule inner protein component of sperm flagellar doublet microtubules. Interacts with BRCA2. Interacts with the CCT chaperonin complex. Interacts with HSP70. Interacts with AK8. Interacts with CFAP45. Interacts with DNAI1. Interacts with IQDC.

It is found in the cytoplasm. It localises to the cytoskeleton. Its subcellular location is the cilium axoneme. The protein localises to the flagellum axoneme. Its function is as follows. Microtubule inner protein (MIP) part of the dynein-decorated doublet microtubules (DMTs) in cilia axoneme. Important for proper ciliary and flagellar beating. May act in cooperation with CFAP45 and axonemal dynein subunit DNAH11. May play a role in cell growth and/or survival. The sequence is that of Cilia- and flagella-associated protein 52 from Mus musculus (Mouse).